The primary structure comprises 287 residues: MPDFLGHAENPLREEEWARLNETVIQVARRSLVGRRILDIYGPLGAGVQTVPYDEFQGVSPGAVDIVGEQETAMVFTDARKFKTIPIIYKDFLLHWRDIEAARTHNMPLDVSAAAGAAALCAQQEDELIFYGDARLGYEGLMTANGRLTVPLGDWTSPGGGFQAIVEATRKLNEQGHFGPYAVVLSPRLYSQLHRIYEKTGVLEIETIRQLASDGVYQSNRLRGESGVVVSTGRENMDLAVSMDMVAAYLGASRMNHPFRVLEALLLRIKHPDAICTLEGAGATERR.

Belongs to the encapsulin family. Family 1 subfamily. In terms of assembly, the 32 nm encapsulin nanocompartment is formed by 180 subunits; monomers form pentamers which assemble to form shells. There are 36 pores where the pentamers meet as well as 3-fold axis channels and dimer channels. The N-terminus of the protein is inside the shell.

The protein resides in the encapsulin nanocompartment. In terms of biological role, shell component of a type 1, iron-storage encapsulin nanocompartment. Encapsulin nanocompartments are 32 nm in diameter with an iron- and phosphorus-rich core (4Fe:1P) about 24 nm in diameter. Upon expression in E.coli most particles are 32 nm, 20% are 18 nm. The core is filled with an average of 14 dense granules, 5-6 nm in diameter that are not evenly distributed. Each nanocompartment is estimated to hold 30,000-35,000 Fe atoms. The minor proteins EncB, EncC and EncD probably lie against the interior face of the nanocompartment. The sequence is that of Type 1 encapsulin shell protein EncA from Myxococcus xanthus (strain DK1622).